The primary structure comprises 128 residues: Large ribosomal subunit protein bL17 (128 aa).

It belongs to the bacterial ribosomal protein bL17 family. Part of the 50S ribosomal subunit. Contacts protein L32.

The sequence is that of Large ribosomal subunit protein bL17 from Streptococcus equi subsp. equi (strain 4047).